The sequence spans 183 residues: Large ribosomal subunit protein uL5 (183 aa).

Belongs to the universal ribosomal protein uL5 family. Part of the 50S ribosomal subunit; part of the 5S rRNA/L5/L18/L25 subcomplex. Contacts the 5S rRNA and the P site tRNA. Forms a bridge to the 30S subunit in the 70S ribosome.

Its function is as follows. This is one of the proteins that bind and probably mediate the attachment of the 5S RNA into the large ribosomal subunit, where it forms part of the central protuberance. In the 70S ribosome it contacts protein S13 of the 30S subunit (bridge B1b), connecting the 2 subunits; this bridge is implicated in subunit movement. Contacts the P site tRNA; the 5S rRNA and some of its associated proteins might help stabilize positioning of ribosome-bound tRNAs. The sequence is that of Large ribosomal subunit protein uL5 from Fusobacterium nucleatum subsp. nucleatum (strain ATCC 25586 / DSM 15643 / BCRC 10681 / CIP 101130 / JCM 8532 / KCTC 2640 / LMG 13131 / VPI 4355).